Reading from the N-terminus, the 229-residue chain is Large ribosomal subunit protein bL25 (229 aa).

Disordered regions lie at residues 1 to 21 and 182 to 229; these read MDII…ASSR and NAPE…KDKK. The span at 195 to 222 shows a compositional bias: low complexity; it reads PAAGAPAAGAAAAPAAGAAAPAKGAAPA.

The protein belongs to the bacterial ribosomal protein bL25 family. CTC subfamily. Part of the 50S ribosomal subunit; part of the 5S rRNA/L5/L18/L25 subcomplex. Contacts the 5S rRNA. Binds to the 5S rRNA independently of L5 and L18.

Functionally, this is one of the proteins that binds to the 5S RNA in the ribosome where it forms part of the central protuberance. In Sorangium cellulosum (strain So ce56) (Polyangium cellulosum (strain So ce56)), this protein is Large ribosomal subunit protein bL25.